The primary structure comprises 487 residues: Acetyl-coenzyme A carboxylase carboxyl transferase subunit beta, chloroplastic (487 aa).

One can recognise a CoA carboxyltransferase N-terminal domain in the interval 223–487 (LWVQCENCYG…LHAFFPLNQN (265 aa)). 4 residues coordinate Zn(2+): cysteine 227, cysteine 230, cysteine 246, and cysteine 249. The segment at 227-249 (CENCYGLNYKKSFKSKMNLCEQC) adopts a C4-type zinc-finger fold.

This sequence belongs to the AccD/PCCB family. In terms of assembly, acetyl-CoA carboxylase is a heterohexamer composed of biotin carboxyl carrier protein, biotin carboxylase and 2 subunits each of ACCase subunit alpha and ACCase plastid-coded subunit beta (accD). Zn(2+) serves as cofactor.

It localises to the plastid. The protein resides in the chloroplast stroma. The catalysed reaction is N(6)-carboxybiotinyl-L-lysyl-[protein] + acetyl-CoA = N(6)-biotinyl-L-lysyl-[protein] + malonyl-CoA. It participates in lipid metabolism; malonyl-CoA biosynthesis; malonyl-CoA from acetyl-CoA: step 1/1. Its function is as follows. Component of the acetyl coenzyme A carboxylase (ACC) complex. Biotin carboxylase (BC) catalyzes the carboxylation of biotin on its carrier protein (BCCP) and then the CO(2) group is transferred by the transcarboxylase to acetyl-CoA to form malonyl-CoA. The polypeptide is Acetyl-coenzyme A carboxylase carboxyl transferase subunit beta, chloroplastic (Panax ginseng (Korean ginseng)).